The sequence spans 489 residues: 2-(3-amino-3-carboxypropyl)histidine synthase subunit 2 (489 aa).

Met-1 is modified (N-acetylmethionine). Residue Ser-7 is modified to Phosphoserine. The [4Fe-4S] cluster site is built by Cys-89, Cys-110, and Cys-341. At Thr-435 the chain carries Phosphothreonine. Phosphoserine is present on residues Ser-446 and Ser-456. Thr-467 carries the post-translational modification Phosphothreonine. Ser-488 carries the post-translational modification Phosphoserine.

This sequence belongs to the DPH1/DPH2 family. DPH2 subfamily. Component of the 2-(3-amino-3-carboxypropyl)histidine synthase complex composed of DPH1, DPH2, DPH3 and a NADH-dependent reductase. Interacts with DPH1. It depends on [4Fe-4S] cluster as a cofactor. In terms of tissue distribution, strongly expressed in skeletal muscle. Moderately expressed in heart, small intestine, liver, pancreas, testis and colon. Weakly expressed in brain, placenta, kidney, spleen, thymus, prostate, ovary and lymphocytes.

It participates in protein modification; peptidyl-diphthamide biosynthesis. Required for the first step of diphthamide biosynthesis, a post-translational modification of histidine which occurs in elongation factor 2. DPH1 and DPH2 transfer a 3-amino-3-carboxypropyl (ACP) group from S-adenosyl-L-methionine (SAM) to a histidine residue, the reaction is assisted by a reduction system comprising DPH3 and a NADH-dependent reductase. Facilitates the reduction of the catalytic iron-sulfur cluster found in the DPH1 subunit. This Homo sapiens (Human) protein is 2-(3-amino-3-carboxypropyl)histidine synthase subunit 2 (DPH2).